Reading from the N-terminus, the 394-residue chain is Elongation factor Tu (394 aa).

The 195-residue stretch at 10-204 (KPHINVGTIG…FLDTYIPEPK (195 aa)) folds into the tr-type G domain. Positions 19-26 (GHVDHGKT) are G1. 19–26 (GHVDHGKT) serves as a coordination point for GTP. Thr-26 provides a ligand contact to Mg(2+). The segment at 60–64 (GITIN) is G2. The segment at 81-84 (DCPG) is G3. Residues 81-85 (DCPGH) and 136-139 (NKCD) each bind GTP. The segment at 136-139 (NKCD) is G4. The G5 stretch occupies residues 174–176 (SAL).

This sequence belongs to the TRAFAC class translation factor GTPase superfamily. Classic translation factor GTPase family. EF-Tu/EF-1A subfamily. Monomer.

Its subcellular location is the cytoplasm. It catalyses the reaction GTP + H2O = GDP + phosphate + H(+). In terms of biological role, GTP hydrolase that promotes the GTP-dependent binding of aminoacyl-tRNA to the A-site of ribosomes during protein biosynthesis. In Buchnera aphidicola subsp. Schizaphis graminum (strain Sg), this protein is Elongation factor Tu.